An 822-amino-acid chain; its full sequence is LPS-assembly protein LptD (822 aa).

Residues 1 to 37 (MRRASRSPFILSPVAHAVSRLVLCATLGWTYAGSGHA) form the signal peptide. The disordered stretch occupies residues 38-97 (QVPAPAGGSEVPLGARPPASAPVAAQQETPLKLKSSPALAEEVPNGPGDEGPTFVFGDSV).

Belongs to the LptD family. Component of the lipopolysaccharide transport and assembly complex. Interacts with LptE and LptA.

It localises to the cell outer membrane. In terms of biological role, together with LptE, is involved in the assembly of lipopolysaccharide (LPS) at the surface of the outer membrane. This chain is LPS-assembly protein LptD, found in Polaromonas sp. (strain JS666 / ATCC BAA-500).